An 816-amino-acid polypeptide reads, in one-letter code: Endo-acting ulvan lyase (816 aa).

A signal peptide spans 1–23; that stretch reads MGTSVRRISVVLMMLFGTNFCWS.

Belongs to the polysaccharide lyase family.

It is found in the cell surface. The protein localises to the periplasm. Ulvan lyase involved in ulvan degradation. Ulvan is the main polysaccharide component of the Ulvales (green seaweed) cell wall. It is composed of disaccharide building blocks comprising 3-sulfated rhamnose (Rha3S) linked to D-glucuronic acid (GlcA), L-iduronic acid (IduA), or D-xylose (Xyl). Ulvan lyase catalyzes the endolytic cleavage of the glycosidic bond between Rha3S and the uronic acids GlcA or IduA, producing oligosaccharides that have unsaturated 4-deoxy-L-threo-hex-4-enopyranosiduronic acid (deltaUA) at the non-reducing end. This results eventually in the degradation of the ulvan polysaccharide into deltaUA-Rha3S disaccharides and deltaUA-Rha3S-Xyl-Rha3S tetrasaccharides. The protein is Endo-acting ulvan lyase of Formosa agariphila (strain DSM 15362 / KCTC 12365 / LMG 23005 / KMM 3901 / M-2Alg 35-1).